Reading from the N-terminus, the 169-residue chain is Thaumatin-like pathogenesis-related protein 3 (169 aa).

The signal sequence occupies residues Met1–Ala21.

This sequence belongs to the thaumatin family.

In terms of biological role, associated with resistance against stem rust fungi. The polypeptide is Thaumatin-like pathogenesis-related protein 3 (RASTL-3) (Avena sativa (Oat)).